The sequence spans 369 residues: Fructose-bisphosphate aldolase 2 (369 aa).

Position 40 (Asp-40) interacts with dihydroxyacetone phosphate. D-glyceraldehyde 3-phosphate contacts are provided by Ser-42 and Thr-45. Position 49 (Arg-49) interacts with beta-D-fructose 1,6-bisphosphate. Lys-113 is a binding site for D-glyceraldehyde 3-phosphate. Lys-152 contributes to the dihydroxyacetone phosphate binding site. Glu-195 is a D-glyceraldehyde 3-phosphate binding site. Glu-195 acts as the Proton acceptor in catalysis. Dihydroxyacetone phosphate-binding residues include Lys-237, Ser-279, and Gly-280. Lys-237 acts as the Schiff-base intermediate with dihydroxyacetone phosphate in catalysis. Residues 279–281 and Ser-307 contribute to the beta-D-fructose 1,6-bisphosphate site; that span reads SGG. Gly-309 and Arg-310 together coordinate dihydroxyacetone phosphate. Residue Arg-310 participates in beta-D-fructose 1,6-bisphosphate binding.

The protein belongs to the class I fructose-bisphosphate aldolase family.

Its subcellular location is the cytoplasm. The protein localises to the membrane. The protein resides in the host cell membrane. The catalysed reaction is beta-D-fructose 1,6-bisphosphate = D-glyceraldehyde 3-phosphate + dihydroxyacetone phosphate. It participates in carbohydrate degradation; glycolysis; D-glyceraldehyde 3-phosphate and glycerone phosphate from D-glucose: step 4/4. In terms of biological role, plays a key role in glycolysis by catalyzing the cleavage of fructose 1,6-bisphosphate into dihydroxyacetone phosphate and glyceraldehyde 3-phosphate. This chain is Fructose-bisphosphate aldolase 2 (ALDO2), found in Plasmodium berghei (strain Anka).